Here is a 508-residue protein sequence, read N- to C-terminus: Fc receptor-like protein 2 (508 aa).

Positions 1-19 (MLLWSLLVIFDAVTEQADS) are cleaved as a signal peptide. Ig-like C2-type domains follow at residues 20 to 98 (LTLV…SNIV), 109 to 187 (PVLT…HRIR), 201 to 290 (PISN…KVVN), and 300 to 387 (PVLT…VSIS). At 20-401 (LTLVAPSSVF…YRRDLMTAGV (382 aa)) the chain is on the extracellular side. Cysteines 128 and 177 form a disulfide. N-linked (GlcNAc...) asparagine glycans are attached at residues Asn204, Asn234, Asn343, Asn355, and Asn365. Disulfide bonds link Cys226-Cys275 and Cys321-Cys368. The chain crosses the membrane as a helical span at residues 402-422 (LWGLFGVLGFTGVALLLYALF). Residues 423–508 (HKISGESSAT…QVIYSSVKKS (86 aa)) are Cytoplasmic-facing. The interval 429-453 (SSATNEPRGASRPNPQEFTYSSPTP) is disordered. The segment covering 441–452 (PNPQEFTYSSPT) has biased composition (polar residues). Short sequence motifs (ITIM motif) lie at residues 446 to 451 (FTYSSP), 460 to 465 (PVYVNV), 472 to 477 (VVYSQV), and 500 to 505 (VIYSSV).

As to quaternary structure, the tyrosine-phosphorylated isoform 2 interacts with PTPN6. Isoform 2 is N- and O-glycosylated, and phosphorylated. As to expression, expressed in the secondary lymphoid organs, spleen and lymph node. Expression is limited to the mature B-cell lines. Highly expressed in CD19 and within the mantle zones of the tonsil tissue. Isoform 2 is expressed in the spleen, peripheral blood and bone marrow. Isoform 2 and isoform 4 are expressed in B-cell lines. Preferentially expressed in memory B-cells (at protein level).

The protein localises to the cell membrane. Functionally, may have an regulatory role in normal and neoplastic B cell development. The polypeptide is Fc receptor-like protein 2 (FCRL2) (Homo sapiens (Human)).